A 163-amino-acid chain; its full sequence is Phosphopantetheine adenylyltransferase (163 aa).

Thr10 lines the substrate pocket. ATP-binding positions include 10 to 11 (TF) and His18. Substrate-binding residues include Lys42, Leu74, and Arg88. ATP is bound by residues 89-91 (GLR), Glu99, and 124-130 (NSFISST).

This sequence belongs to the bacterial CoaD family. As to quaternary structure, homohexamer. It depends on Mg(2+) as a cofactor.

Its subcellular location is the cytoplasm. The enzyme catalyses (R)-4'-phosphopantetheine + ATP + H(+) = 3'-dephospho-CoA + diphosphate. It participates in cofactor biosynthesis; coenzyme A biosynthesis; CoA from (R)-pantothenate: step 4/5. Its function is as follows. Reversibly transfers an adenylyl group from ATP to 4'-phosphopantetheine, yielding dephospho-CoA (dPCoA) and pyrophosphate. The chain is Phosphopantetheine adenylyltransferase from Shewanella baltica (strain OS195).